Reading from the N-terminus, the 237-residue chain is MDSFLRLLIHGASGRMGQSLLRLASEDPSFQVTAAVVGNAPHRHVSDGVPFFAAAELAAVPAFDVAIDFSLPQGFSSLLALCVARAVPLVSGTTGLDSRQHEALVMAGARIPLVWGSNFSVGMAALVNLVERAGDALSGWDCDIVESHHVHKQDAPSGSALTLGEAVACKGIAPRYTSLRAGDIVGDHLVQFTGLGERIELVHRATNRDVFARGALCVARRVVGRVPGCYRVRDLIM.

Residues 11-16 (GASGRM), 92-94 (GTT), and 116-119 (GSNF) each bind NAD(+). Residue His-148 is the Proton donor/acceptor of the active site. His-149 lines the (S)-2,3,4,5-tetrahydrodipicolinate pocket. Lys-152 functions as the Proton donor in the catalytic mechanism. Residue 158 to 159 (GS) participates in (S)-2,3,4,5-tetrahydrodipicolinate binding.

It belongs to the DapB family.

It is found in the cytoplasm. The enzyme catalyses (S)-2,3,4,5-tetrahydrodipicolinate + NAD(+) + H2O = (2S,4S)-4-hydroxy-2,3,4,5-tetrahydrodipicolinate + NADH + H(+). The catalysed reaction is (S)-2,3,4,5-tetrahydrodipicolinate + NADP(+) + H2O = (2S,4S)-4-hydroxy-2,3,4,5-tetrahydrodipicolinate + NADPH + H(+). Its pathway is amino-acid biosynthesis; L-lysine biosynthesis via DAP pathway; (S)-tetrahydrodipicolinate from L-aspartate: step 4/4. In terms of biological role, catalyzes the conversion of 4-hydroxy-tetrahydrodipicolinate (HTPA) to tetrahydrodipicolinate. This is 4-hydroxy-tetrahydrodipicolinate reductase from Xylella fastidiosa (strain M12).